The primary structure comprises 511 residues: MSIPTDIANLLIGEDAKLSIHFDKIPLHNDAHHSGSKFYMLSTNRALRDHEEKEDDLKYLSKGRQGAIRLNQLLNAPHLIKERESTAQNEGKAVMRLGETAMVIDETFDAQPIHSHIWNSFMSIEFRFPQADFTSLQYLQTSWKGLESGDTLYTKEGTPTFEEVSIVSGVCLFNARLLEMSTTCPKSGGVDVDLLKSSTPTYNELDYIARASSAIADVAAMNILRACEQDSGQRLTIKLDIPSWHYFHTVATKFVSKQCSNTEVLQWMDAVDQRHDQIGQTFVEAIRYGLEQRGIHDSTSYGIGMTSRTNTAAILIRTAIEHEEVPSLDAILAALDSEEDGCWKRFYEMIPVKERPSNLDQLGYLYYVYEAIRPSLAERPAPVPLESDQTKKANLSKKALKKRKPRRLIISVDDSAERRIYSRAQRVLSKIRQCSEKPETYLVESYVCRRFLVNGNEDRARLGRLDPLPDIPVRTGFHHEPMLPLDVVRQLYGNKSALNLQRWLQEAGLSV.

The Conserved DDXXE motif motif lies at Asp413 to Glu417.

This sequence belongs to the arginine-containing cyclodipeptide synthase family.

It catalyses the reaction L-arginyl-tRNA(Arg) + L-leucyl-tRNA(Leu) = cyclo(L-arginyl-L-leucyl) + tRNA(Arg) + tRNA(Leu) + 2 H(+). The protein operates within secondary metabolite biosynthesis. In terms of biological role, arginine-containing cyclodipeptide synthase; part of the cluster that mediates the biosynthesis of a highly modified cyclo-arginine-leucine dipeptide (cRW). Within the pathway, eshA acts as the scaffold-generating enzyme and is responsible for formation of the cyclo-Arg-Leu diketopiperazine (cRL) from L-arginyl-tRNA(Arg) + L-Leucyl-tRNA(Leu). Additional enzymes from the cluster then further modify the cyclo-Arg-Leu diketopiperazine (cRW) scaffold. The protein is Arginine-containing cyclodipeptide synthase eshA of Penicillium shearii (Eupenicillium shearii).